A 591-amino-acid chain; its full sequence is Frizzled and smoothened-like protein F (591 aa).

A signal peptide spans 1–17 (MKILIIFIIFIISYISG). At 18–244 (FEIPKGFGIG…KWDQLLTMSK (227 aa)) the chain is on the extracellular side. The FZ domain occupies 30 to 177 (IPDAECLNYI…GTFAVPCSDP (148 aa)). 3 cysteine pairs are disulfide-bonded: Cys35-Cys105, Cys48-Cys98, and Cys123-Cys174. N-linked (GlcNAc...) asparagine glycans are attached at residues Asn167, Asn187, Asn202, and Asn230. Residues 245 to 265 (ILSTISFILSLYNVLTFGIIN) form a helical membrane-spanning segment. At 266-275 (KKVSDPHKCT) the chain is on the cytoplasmic side. Residues 276 to 296 (CFFSGSIALVNLCDIITYGIG) form a helical membrane-spanning segment. At 297-321 (YEELLCPEPGRSAKQQLDPVCGLTG) the chain is on the extracellular side. The chain crosses the membrane as a helical span at residues 322-342 (AFFHLGITYCVLWSMTMGLVL). Over 343–353 (YCSVKRQKWFK) the chain is Cytoplasmic. The chain crosses the membrane as a helical span at residues 354-374 (FNYFLIGNTTFTITTVVIAAA). Residues 375 to 397 (TSKFEAGLGSIECWIRDRWYAIS) are Extracellular-facing. The helical transmembrane segment at 398 to 418 (LFWIPCGIALLIGSFCIIAVI) threads the bilayer. Topologically, residues 419-442 (HEVYKTSKKSISNRNDLLQRELKP) are cytoplasmic. Residues 443–463 (LLIVIFISGSFLYLFIFFFDI) traverse the membrane as a helical segment. At 464–495 (ERKFGGYRSAVEDYVLCLLNGSQEECFTTGPS) the chain is on the extracellular side. Asn483 carries N-linked (GlcNAc...) asparagine glycosylation. A helical transmembrane segment spans residues 496-516 (YVPYFLFYLVIRWFGIIFFLF). At 517–591 (YGTSNIARKI…AVELESIKIN (75 aa)) the chain is on the cytoplasmic side. A compositionally biased stretch (low complexity) spans 538-571 (SSISPKSTPKSSPKNSDSKINSNSTNNNNMILND). The segment at 538–573 (SSISPKSTPKSSPKNSDSKINSNSTNNNNMILNDNN) is disordered.

It belongs to the G-protein coupled receptor Fz/Smo family.

It localises to the membrane. The polypeptide is Frizzled and smoothened-like protein F (fslF) (Dictyostelium discoideum (Social amoeba)).